The primary structure comprises 242 residues: uncharacterized protein (242 aa).

Disordered regions lie at residues 16-121 (GLYK…GAMA) and 152-178 (PVRP…TQPV). Composition is skewed to pro residues over residues 50 to 64 (PRPP…PSPA) and 97 to 113 (EPRP…PPGP). The span at 157 to 172 (KLPKGKGRLRRPRQSR) shows a compositional bias: basic residues. Residue Thr-175 is modified to Phosphothreonine. Phosphoserine is present on residues Ser-192, Ser-206, Ser-216, Ser-232, and Ser-238. The tract at residues 215–242 (QSLSLQREPLGSCKLRNSLDSSDSDSAL) is disordered. The span at 232-242 (SLDSSDSDSAL) shows a compositional bias: low complexity.

It localises to the cytoplasm. This is an uncharacterized protein from Rattus norvegicus (Rat).